The sequence spans 401 residues: Inositol phosphorylceramide synthase catalytic subunit AUR1 (401 aa).

The Cytoplasmic segment spans residues 1–41; that stretch reads MANPFSRWFLSERPPNCHVADLETSLDPHQTLLKVQKYKPA. The chain crosses the membrane as a helical span at residues 42–62; that stretch reads LSDWVHYIFLGSIMLFVFITN. The Lumenal segment spans residues 63–64; the sequence is PA. A helical membrane pass occupies residues 65–85; that stretch reads PWIFKILFYCFLGTLFIIPAT. Over 86–87 the chain is Cytoplasmic; sequence SQ. A helical membrane pass occupies residues 88–108; sequence FFFNALPILTWVALYFTSSYF. At 109–155 the chain is on the lumenal side; sequence PDDRRPPITVKVLPAVETILYGDNLSDILATSTNSFLDILAWLPYGL. The N-linked (GlcNAc...) asparagine glycan is linked to N132. The helical transmembrane segment at 156-176 threads the bilayer; the sequence is FHFGAPFVVAAILFVFGPPTV. The Cytoplasmic segment spans residues 177 to 178; that stretch reads LQ. A helical membrane pass occupies residues 179 to 199; it reads GYAFAFGYMNLFGVIMQNVFP. The Lumenal segment spans residues 200 to 245; sequence AAPPWYKILYGLQSANYDMHGSPGGLARIDKLLGINMYTTAFSNSS. A helical transmembrane segment spans residues 246–266; sequence VIFGAFPSLHSGCATMEALFF. Residues 267–268 are Cytoplasmic-facing; it reads CY. The chain crosses the membrane as a helical span at residues 269 to 289; that stretch reads CFPKLKPLFIAYVCWLWWSTM. Topologically, residues 290–291 are lumenal; it reads YL. A helical membrane pass occupies residues 292–312; the sequence is THHYFVDLMAGSVLSYVIFQY. Residues 313–401 are Cytoplasmic-facing; sequence TKYTHLPIVD…SITSLGVKRA (89 aa). The segment at 374–401 is disordered; that stretch reads VSPSLFDGSTSVSRSSATSITSLGVKRA. A compositionally biased stretch (low complexity) spans 382–395; that stretch reads STSVSRSSATSITS. Residues S392 and S395 each carry the phosphoserine modification.

It belongs to the AUR1 family. Component of the inositol phosphorylceramide synthase complex composed of at least AUR1 and KEI1.

The protein resides in the golgi apparatus. It localises to the golgi stack membrane. It carries out the reaction an N-(2R-hydroxy-very-long-chain fatty acyl)-(R)-4-hydroxysphingoid base + a 1,2-diacyl-sn-glycero-3-phospho-(1D-myo-inositol) = a 1D-myo-inositol-1-phospho-N-[(R)-2-hydroxy-very-long-chain fatty acyl]-(R)-4-hydroxysphingoid base + a 1,2-diacyl-sn-glycerol. Inhibited by aureobasidin A (AbA), khafrefungin and rustmicin. In terms of biological role, catalytic component of the inositol phosphorylceramide synthase which catalyzes the addition of a phosphorylinositol group onto ceramide to form inositol phosphorylceramide, an essential step in sphingolipid biosynthesis. The chain is Inositol phosphorylceramide synthase catalytic subunit AUR1 from Saccharomyces cerevisiae (strain ATCC 204508 / S288c) (Baker's yeast).